Here is a 205-residue protein sequence, read N- to C-terminus: Imidazole glycerol phosphate synthase subunit HisH (205 aa).

The Glutamine amidotransferase type-1 domain occupies 6–205 (RVGIIDHGSG…LLTRWLNQLS (200 aa)). Residue Cys84 is the Nucleophile of the active site. Active-site residues include His185 and Glu187.

In terms of assembly, heterodimer of HisH and HisF.

Its subcellular location is the cytoplasm. It catalyses the reaction 5-[(5-phospho-1-deoxy-D-ribulos-1-ylimino)methylamino]-1-(5-phospho-beta-D-ribosyl)imidazole-4-carboxamide + L-glutamine = D-erythro-1-(imidazol-4-yl)glycerol 3-phosphate + 5-amino-1-(5-phospho-beta-D-ribosyl)imidazole-4-carboxamide + L-glutamate + H(+). It carries out the reaction L-glutamine + H2O = L-glutamate + NH4(+). Its pathway is amino-acid biosynthesis; L-histidine biosynthesis; L-histidine from 5-phospho-alpha-D-ribose 1-diphosphate: step 5/9. Its function is as follows. IGPS catalyzes the conversion of PRFAR and glutamine to IGP, AICAR and glutamate. The HisH subunit catalyzes the hydrolysis of glutamine to glutamate and ammonia as part of the synthesis of IGP and AICAR. The resulting ammonia molecule is channeled to the active site of HisF. This Cutibacterium acnes (strain DSM 16379 / KPA171202) (Propionibacterium acnes) protein is Imidazole glycerol phosphate synthase subunit HisH.